We begin with the raw amino-acid sequence, 95 residues long: Protein RALF-like 16 (95 aa).

The signal sequence occupies residues 1–29 (MVAYEKSPIVFLFATMMLVMFLFCGSGEA). Cystine bridges form between Cys45-Cys53 and Cys65-Cys71.

This sequence belongs to the plant rapid alkalinization factor (RALF) family.

It is found in the secreted. Its function is as follows. Cell signaling peptide that may regulate plant stress, growth, and development. Mediates a rapid alkalinization of extracellular space by mediating a transient increase in the cytoplasmic Ca(2+) concentration leading to a calcium-dependent signaling events through a cell surface receptor and a concomitant activation of some intracellular mitogen-activated protein kinases. This is Protein RALF-like 16 (RALFL16) from Arabidopsis thaliana (Mouse-ear cress).